The chain runs to 3174 residues: Intermembrane lipid transfer protein VPS13A (3174 aa).

In terms of domain architecture, Chorein N-terminal spans 3–116 (FESVVVDVLN…LMEAKQQELK (114 aa)). TPR repeat units lie at residues 212–245 (LFAYWNVKSQMFYLSDYDNSLDDLKNGIVNENIV), 373–406 (LTSKKPPGELLVSLEELEKTLDVFNITIARQTAE), and 537–575 (IDSFHITGLPDNSEKPRLLSSLDDAMSLFQITFEINPLD). At Ser839 the chain carries Phosphoserine. The FFAT signature appears at 842-848 (EFFDAPC). TPR repeat units follow at residues 1256–1289 (VIDLITIKLSEMRLYRSRFINDAYQEVLDLLLPL) and 1291–1320 (LEVVVERNLCWEWYQEVPCFNVNAQLKPME). The residue at position 1416 (Ser1416) is a Phosphoserine. The stretch at 2009-2041 (YEGDTLLGTASPENEFNIPLGSYRSFIFLKPED) is one TPR 6 repeat. Residues 2209–2454 (VAFHSPYWMV…VFYTWADPVG (246 aa)) form the SHR-BD domain. TPR repeat units lie at residues 2568-2601 (PMSVKHTEKLEREFKEYTESSPSEDKVIQLDTNV), 2717-2751 (LGFIYALTDLMTEAEVTENTEVELFHKDIEAFKEE), and 2860-2898 (ILGLDVLGNPFGLIREFSEGVEAFFYEPYQGAIQGPEEF). The interval 2751 to 3174 (EYKTASLVDQ…QEAREPSPSL (424 aa)) is required for mitochondrial localization. The segment at 2953–3027 (PAGFREGITR…SSTFQGIKRA (75 aa)) is required for lipid droplet localization. Residues 3086 to 3119 (MLMITRRGVLFVTKGTFGQLTCEWQYSFDEFTKE) form a TPR 10 repeat.

The protein belongs to the VPS13 family. As to quaternary structure, interacts (via FFAT motif) with VAPA and VAPB. Interacts with RAB7A. Interacts with XK. In terms of tissue distribution, expressed in red blood cells (at protein level). Widely expressed, with high expression in brain, heart, skeletal muscle and kidney.

The protein localises to the mitochondrion outer membrane. Its subcellular location is the endoplasmic reticulum membrane. The protein resides in the endosome membrane. It is found in the lysosome membrane. It localises to the lipid droplet. The protein localises to the golgi apparatus. Its subcellular location is the cytoplasmic vesicle. The protein resides in the secretory vesicle. It is found in the neuronal dense core vesicle. Functionally, mediates the transfer of lipids between membranes at organelle contact sites. Binds phospholipids. Required for the formation or stabilization of ER-mitochondria contact sites which enable transfer of lipids between the ER and mitochondria. Negatively regulates lipid droplet size and motility. Required for efficient lysosomal protein degradation. The chain is Intermembrane lipid transfer protein VPS13A (VPS13A) from Homo sapiens (Human).